Consider the following 80-residue polypeptide: UPF0291 protein llmg_1475 (80 aa).

It belongs to the UPF0291 family.

It is found in the cytoplasm. The polypeptide is UPF0291 protein llmg_1475 (Lactococcus lactis subsp. cremoris (strain MG1363)).